A 455-amino-acid chain; its full sequence is Argininosuccinate lyase (455 aa).

Belongs to the lyase 1 family. Argininosuccinate lyase subfamily.

It localises to the cytoplasm. It carries out the reaction 2-(N(omega)-L-arginino)succinate = fumarate + L-arginine. Its pathway is amino-acid biosynthesis; L-arginine biosynthesis; L-arginine from L-ornithine and carbamoyl phosphate: step 3/3. In Shewanella sp. (strain MR-4), this protein is Argininosuccinate lyase.